The sequence spans 29 residues: Cyclotide psyleio A (29 aa).

The segment at residues 1 to 29 (GLPICGETCFTGTCNTPGCSCTYPICTRD) is a cross-link (cyclopeptide (Gly-Asp)). Cystine bridges form between Cys-5/Cys-19, Cys-9/Cys-21, and Cys-14/Cys-26.

Post-translationally, this is a cyclic peptide.

Its function is as follows. Probably participates in a plant defense mechanism. In Psychotria brachyceras, this protein is Cyclotide psyleio A.